A 382-amino-acid polypeptide reads, in one-letter code: Kelch domain-containing protein 3 (382 aa).

Kelch repeat units follow at residues 25 to 77, 88 to 138, 139 to 189, 191 to 249, and 251 to 301; these read RVYS…PYMR, TVFL…VLGK, IMYI…TMLG, HMYV…GYNG, and LYIF…IVGD.

In terms of assembly, component of a CRL2(KLHDC3) complex, also named ECS(KLHDC3) complex, composed of CUL2, Elongin BC (ELOB and ELOC), RBX1 and substrate-specific adapter KLHDC3. May form oligomers as a KLHDC3-ELOB-ELOC complex; this interaction is likely autoinhibitory for the E3 ligase complex.

It localises to the cytoplasm. It functions in the pathway protein modification; protein ubiquitination. Substrate-recognition component of a Cul2-RING (CRL2) E3 ubiquitin-protein ligase complex of the DesCEND (destruction via C-end degrons) pathway, which recognizes a C-degron located at the extreme C terminus of target proteins, leading to their ubiquitination and degradation. The C-degron recognized by the DesCEND pathway is usually a motif of less than ten residues and can be present in full-length proteins, truncated proteins or proteolytically cleaved forms. The CRL2(KLHDC3) complex specifically recognizes proteins with a glycine (Gly) at the C-terminus, leading to their ubiquitination and degradation: recognizes the C-terminal -Arg-(Xaa)n-Arg-Gly, -Arg-(Xaa)n-Lys-Gly, and -Arg-(Xaa)n-Gln-Gly degrons. The CRL2(KLHDC3) complex mediates ubiquitination and degradation of truncated SELENOV and SEPHS2 selenoproteins produced by failed UGA/Sec decoding, which end with a glycine. May be involved in meiotic recombination process. The protein is Kelch domain-containing protein 3 of Rattus norvegicus (Rat).